The chain runs to 308 residues: Phosphate transport system permease protein PstA 1 (308 aa).

6 consecutive transmembrane segments (helical) span residues 36–56, 96–116, 132–152, 155–175, 204–224, and 276–296; these read FFFT…WVVI, AGVA…YLVE, VLAG…WIAT, FQQS…PVVV, IVRI…LLSI, and WGAA…AAMI. The ABC transmembrane type-1 domain occupies 89–297; the sequence is LYGTLVQAGV…TINLAAAMIR (209 aa).

It belongs to the binding-protein-dependent transport system permease family. CysTW subfamily. In terms of assembly, the complex is composed of two ATP-binding proteins (PstB), two transmembrane proteins (PstC and PstA) and a solute-binding protein (PstS).

It is found in the cell membrane. In terms of biological role, part of the binding-protein-dependent transport system for phosphate; probably responsible for the translocation of the substrate across the membrane. This Mycobacterium tuberculosis (strain ATCC 25618 / H37Rv) protein is Phosphate transport system permease protein PstA 1 (pstA1).